A 360-amino-acid chain; its full sequence is A-type ATP synthase subunit C (360 aa).

The interval 1 to 25 (MRLLEKLWGQKPSRKSDKKKNGTSN) is disordered.

The protein belongs to the V-ATPase V0D/AC39 subunit family. In terms of assembly, has multiple subunits with at least A(3), B(3), C, D, E, F, H, I and proteolipid K(x).

It is found in the cell membrane. Its function is as follows. Component of the A-type ATP synthase that produces ATP from ADP in the presence of a proton gradient across the membrane. This chain is A-type ATP synthase subunit C, found in Methanosarcina barkeri (strain Fusaro / DSM 804).